A 441-amino-acid polypeptide reads, in one-letter code: Maltose-6'-phosphate glucosidase (441 aa).

An NAD(+)-binding site is contributed by 4–70; the sequence is FSILIAGGGS…PQIKFSYSTN (67 aa). The substrate site is built by Arg93 and Asn147. Mn(2+) is bound at residue Cys169. The active-site Proton donor is the Asp170. His200 contacts Mn(2+). Tyr264 (proton acceptor) is an active-site residue. Residue Arg284 coordinates substrate.

Belongs to the glycosyl hydrolase 4 family. Homotetramer. NAD(+) is required as a cofactor. Mn(2+) serves as cofactor. The cofactor is Fe(2+). Requires Co(2+) as cofactor. It depends on Ni(2+) as a cofactor.

It catalyses the reaction alpha-maltose 6'-phosphate + H2O = D-glucose 6-phosphate + D-glucose. Its pathway is glycan degradation; maltose degradation. Functionally, hydrolyzes a wide variety of 6-phospho-alpha-D-glucosides including maltose-6'P, trehalose-6P and the 6'-phosphorylated derivatives of the five linkage-isomeric alpha-D-glucosyl-D-fructoses: trehalulose-6'P, turanose-6'P, maltulose-6'P, leucrose-6'P, and palatinose-6'P. However, sucrose-6P is not a substrate for MalH, and this enzyme also fails to hydrolyze beta-O-linked phosphorylated disaccharides such as cellobiose-6'P and gentobiose-6'P. The sequence is that of Maltose-6'-phosphate glucosidase (malH) from Fusobacterium mortiferum.